We begin with the raw amino-acid sequence, 107 residues long: MMKGGLAGLMKQAQAMQENMKKAQEQLAQVEVEGVAGAGMVKVLMTCAHEVRRVNIDPSVMDDREMLEDLIAAALNDAVRRGEALSKDKMSGFTSGLNLPPGFKLPF.

The protein belongs to the YbaB/EbfC family. As to quaternary structure, homodimer.

The protein resides in the cytoplasm. It localises to the nucleoid. Its function is as follows. Binds to DNA and alters its conformation. May be involved in regulation of gene expression, nucleoid organization and DNA protection. In Dechloromonas aromatica (strain RCB), this protein is Nucleoid-associated protein Daro_0807.